The primary structure comprises 410 residues: MSDIKKAVLAYSGGLDTSVILKWLQDTYGCEIVTFTADFGQGEELEPARAKALQFGIKPENIFIDDLCEEFVRDFVFPMFRANTIYEGEYLLGTSIARPLIAKRQIEIARLTGADSVSHGATGKGNDQVRFELGYYALEPGIKVIVPWREWDLLSREKLMAYAEKHGIPVEMRHKQGGSPYSMDANLLHISYEGRHLENPNAEAEESMWRWTVSPEKAPDAPEIIEIEFKSGDPVAINGKAYKPHELLAELNRIGGMHGIGRLDLVENRFVGMKSRGCYETPGGTILLKAHRGIESITLDREVAHLKDDLMPRYASLIYNGLWWAPERLALQTLIDHTQQAVNGIVRLKLYKGSVSVISRDSANTLFDQNIATFDDDGGAYNQADAGGFIKLNALRMRIAETARRKRAKK.

ATP-binding positions include 10 to 18 (AYSGGLDTS) and A37. Positions 90 and 95 each coordinate L-citrulline. An ATP-binding site is contributed by G120. L-aspartate is bound by residues T122, N126, and D127. N126 is a binding site for L-citrulline. The L-citrulline site is built by R130, S182, S191, E267, and Y279.

It belongs to the argininosuccinate synthase family. Type 1 subfamily. As to quaternary structure, homotetramer.

The protein resides in the cytoplasm. The catalysed reaction is L-citrulline + L-aspartate + ATP = 2-(N(omega)-L-arginino)succinate + AMP + diphosphate + H(+). The protein operates within amino-acid biosynthesis; L-arginine biosynthesis; L-arginine from L-ornithine and carbamoyl phosphate: step 2/3. This is Argininosuccinate synthase from Polynucleobacter necessarius subsp. necessarius (strain STIR1).